We begin with the raw amino-acid sequence, 270 residues long: NAD kinase (270 aa).

The active-site Proton acceptor is D62. Residues 62 to 63 (DG), R67, 129 to 130 (ND), K140, D159, I167, 170 to 175 (TSYSFS), A194, and Q227 each bind NAD(+).

This sequence belongs to the NAD kinase family. The cofactor is a divalent metal cation.

Its subcellular location is the cytoplasm. The catalysed reaction is NAD(+) + ATP = ADP + NADP(+) + H(+). Its function is as follows. Involved in the regulation of the intracellular balance of NAD and NADP, and is a key enzyme in the biosynthesis of NADP. Catalyzes specifically the phosphorylation on 2'-hydroxyl of the adenosine moiety of NAD to yield NADP. The sequence is that of NAD kinase from Picrophilus torridus (strain ATCC 700027 / DSM 9790 / JCM 10055 / NBRC 100828 / KAW 2/3).